The sequence spans 595 residues: Probable translation initiation factor IF-2 (595 aa).

One can recognise a tr-type G domain in the interval 11-225 (LRTPIVAVLG…ILVGLAQRYL (215 aa)). Positions 20–27 (GHVDHGKT) are G1. GTP is bound at residue 20 to 27 (GHVDHGKT). The interval 45–49 (GITQH) is G2. A G3 region spans residues 81 to 84 (DTPG). GTP is bound by residues 81–85 (DTPGH) and 135–138 (NKID). Positions 135–138 (NKID) are G4. Residues 203–205 (SAL) form a G5 region.

Belongs to the TRAFAC class translation factor GTPase superfamily. Classic translation factor GTPase family. IF-2 subfamily.

Its function is as follows. Function in general translation initiation by promoting the binding of the formylmethionine-tRNA to ribosomes. Seems to function along with eIF-2. This is Probable translation initiation factor IF-2 (infB) from Archaeoglobus fulgidus (strain ATCC 49558 / DSM 4304 / JCM 9628 / NBRC 100126 / VC-16).